Consider the following 295-residue polypeptide: GATA zinc finger domain-containing protein 23 (295 aa).

Positions 115 to 126 are enriched in low complexity; that stretch reads ASTSKTATSKNV. The tract at residues 115–240 is disordered; it reads ASTSKTATSK…KRGRPSKIQP (126 aa). Positions 127–145 are enriched in polar residues; it reads ISNIENNTNKSQPLESNDL. A compositionally biased stretch (low complexity) spans 146-163; it reads TPPSSKSSNSSPSTSPSK. A compositionally biased stretch (basic residues) spans 164–174; that stretch reads RVSKSKTRVTK. Residues 181-227 show a composition bias toward low complexity; sequence STSSSGETENLTTTSTADTTATTDTADTTDGTNTRTSNTSSDDTTTE. The segment at residues 229–241 is a DNA-binding region (a.T hook); it reads TKKRGRPSKIQPD. A GATA-type zinc finger spans residues 243–270; it reads CYVCRRTFTSYWRKGIFNDQNEDLCNPC.

The polypeptide is GATA zinc finger domain-containing protein 23 (gtaW) (Dictyostelium discoideum (Social amoeba)).